Here is a 137-residue protein sequence, read N- to C-terminus: Golgin subfamily A member 7 (137 aa).

Residues cysteine 69 and cysteine 72 are each lipidated (S-palmitoyl cysteine).

This sequence belongs to the ERF4 family. In terms of assembly, interacts with ZDHHC9.

It localises to the golgi apparatus membrane. May be involved in protein transport from Golgi to cell surface. The ZDHHC9-GOLGA7 complex is a palmitoyltransferase specific for HRAS and NRAS. This is Golgin subfamily A member 7 (GOLGA7) from Gallus gallus (Chicken).